We begin with the raw amino-acid sequence, 334 residues long: Retinol dehydrogenase 13 (334 aa).

Ser2 carries the post-translational modification N-acetylserine. 45–51 is an NADP(+) binding site; sequence GANTGIG. Residue Ser174 coordinates substrate. Tyr200 functions as the Proton acceptor in the catalytic mechanism.

This sequence belongs to the short-chain dehydrogenases/reductases (SDR) family.

Its subcellular location is the mitochondrion inner membrane. The catalysed reaction is all-trans-retinol + NADP(+) = all-trans-retinal + NADPH + H(+). It functions in the pathway cofactor metabolism; retinol metabolism. In terms of biological role, retinol dehydrogenase with a clear preference for NADP. Oxidizes all-trans-retinol, but seems to reduce all-trans-retinal with much higher efficiency. Has no activity towards steroid. This Mus musculus (Mouse) protein is Retinol dehydrogenase 13 (Rdh13).